The chain runs to 544 residues: Sialidase (544 aa).

The N-terminal stretch at 1-22 is a signal peptide; sequence MKKAVILFSLFCFLCAIPVVQA. BNR repeat units follow at residues 239–250, 318–329, and 378–389; these read SRSTDGGKTWEK, AKSTDDGKTWSA, and MYSKDGGKNWKM. Residue Glu399 is part of the active site. Substrate is bound at residue Arg415. Residues 425 to 436 form a BNR 4 repeat; the sequence is AITKDLGKTWTE. Residue Arg479 coordinates substrate. Residues 485–496 form a BNR 5 repeat; sequence KISLDGGVTWSP.

The protein belongs to the glycosyl hydrolase 33 family.

The protein resides in the periplasm. The enzyme catalyses Hydrolysis of alpha-(2-&gt;3)-, alpha-(2-&gt;6)-, alpha-(2-&gt;8)- glycosidic linkages of terminal sialic acid residues in oligosaccharides, glycoproteins, glycolipids, colominic acid and synthetic substrates.. In terms of biological role, sialidases have been suggested to be pathogenic factors in microbial infections. This is Sialidase (nanH) from Bacteroides fragilis (strain YCH46).